The sequence spans 207 residues: 2,3-bisphosphoglycerate-dependent phosphoglycerate mutase (207 aa).

Residues 9–16, 22–23, R61, 88–91, K99, 115–116, and 159–160 each bind substrate; these read RHGQSDWN, TG, ERDY, RR, and GN. The active-site Tele-phosphohistidine intermediate is the H10. E88 functions as the Proton donor/acceptor in the catalytic mechanism.

Belongs to the phosphoglycerate mutase family. BPG-dependent PGAM subfamily. In terms of assembly, homodimer.

It catalyses the reaction (2R)-2-phosphoglycerate = (2R)-3-phosphoglycerate. It participates in carbohydrate degradation; glycolysis; pyruvate from D-glyceraldehyde 3-phosphate: step 3/5. Functionally, catalyzes the interconversion of 2-phosphoglycerate and 3-phosphoglycerate. The sequence is that of 2,3-bisphosphoglycerate-dependent phosphoglycerate mutase from Beijerinckia indica subsp. indica (strain ATCC 9039 / DSM 1715 / NCIMB 8712).